We begin with the raw amino-acid sequence, 326 residues long: MNSEHPMTDRVVYRSLMADNLRWDALQLRDGDIIISAPSKSGLTWTQRLVSLLVFDGPDLPGPLSTVSPWLDQTIRPIEEVVATLDAQQHRRFIKTHTPLDGLVLDDRVSYICVGRDPRDAAVSMLYQSANMNEDRMRILHEAVVPFHERIAPPFAELGHARSPTEEFRDWMEGPNQPPPGIGFTHLKGIGTLANILHQLGTVWVRRHLPNVALFHYADYQADLAGELLRPARVLGIAATRDRARDLAQYATLDAMRSRASEIAPNTTDGIWHSDERFFRRGGSGDWQQFFTEAEHLRYYHRINQLAPPDLLAWAHEGRRGYDPAN.

3'-phosphoadenylyl sulfate is bound at residue 40–45 (KSGLTW). His97 serves as the catalytic Proton acceptor. A 3'-phosphoadenylyl sulfate-binding site is contributed by 116–124 (RDPRDAAVS).

Belongs to the sulfotransferase 1 family.

Its function is as follows. Involved in the synthesis of cell wall sulfolipids. The sequence is that of Glycolipid sulfotransferase MRA_1383 from Mycobacterium tuberculosis (strain ATCC 25177 / H37Ra).